The following is a 341-amino-acid chain: Glyceraldehyde-3-phosphate dehydrogenase, cytosolic (341 aa).

Residues 14 to 15 and Asp-36 contribute to the NAD(+) site; that span reads RI. Residues 153–155, Thr-184, 213–214, and Arg-236 each bind D-glyceraldehyde 3-phosphate; these read SCT and TG. Catalysis depends on Cys-154, which acts as the Nucleophile. Residue Asn-318 coordinates NAD(+).

The protein belongs to the glyceraldehyde-3-phosphate dehydrogenase family. In terms of assembly, homotetramer.

The protein localises to the cytoplasm. It carries out the reaction D-glyceraldehyde 3-phosphate + phosphate + NAD(+) = (2R)-3-phospho-glyceroyl phosphate + NADH + H(+). Its pathway is carbohydrate degradation; glycolysis; pyruvate from D-glyceraldehyde 3-phosphate: step 1/5. Key enzyme in glycolysis that catalyzes the first step of the pathway by converting D-glyceraldehyde 3-phosphate (G3P) into 3-phospho-D-glyceroyl phosphate. Essential for the maintenance of cellular ATP levels and carbohydrate metabolism. This Chlamydomonas reinhardtii (Chlamydomonas smithii) protein is Glyceraldehyde-3-phosphate dehydrogenase, cytosolic (GAPC).